A 304-amino-acid chain; its full sequence is MATVIDRHSQPTWRDFLELTKPKVVVLMLITSLIGMLLATKAPLDGFVPWQVLIFGNLGIGLCAGAAAAVNHVVDRRIDSIMARTHKRPLAEGRVSPSMALGFALLLALAGMAVLLAFTNPLTAWLTLASLLGYAALYTGFLKRATPQNIVIGGLAGAAPPLLGWVAITGHLSAEPLLLVLIIFAWTPPHFWALCIHRKDEYAKADIPMLPVTHGERYTKLHILLYTLVLFAVSLMPFVIHMSGLVYLLCALALGARFLDWAWALYCDSRPHAAIRTFKYSIVYLFLLFMALLVDHYLPLKLLL.

8 helical membrane passes run 24–44 (VVVL…KAPL), 47–67 (FVPW…AGAA), 99–119 (MALG…LAFT), 122–142 (LTAW…TGFL), 150–170 (IVIG…AITG), 176–196 (PLLL…ALCI), 228–248 (LVLF…LVYL), and 280–300 (YSIV…YLPL).

This sequence belongs to the UbiA prenyltransferase family. Protoheme IX farnesyltransferase subfamily.

The protein localises to the cell inner membrane. It carries out the reaction heme b + (2E,6E)-farnesyl diphosphate + H2O = Fe(II)-heme o + diphosphate. The protein operates within porphyrin-containing compound metabolism; heme O biosynthesis; heme O from protoheme: step 1/1. Its function is as follows. Converts heme B (protoheme IX) to heme O by substitution of the vinyl group on carbon 2 of heme B porphyrin ring with a hydroxyethyl farnesyl side group. This is Protoheme IX farnesyltransferase 1 from Pseudomonas paraeruginosa (strain DSM 24068 / PA7) (Pseudomonas aeruginosa (strain PA7)).